The sequence spans 252 residues: Proteasome subunit alpha type-3 (252 aa).

This sequence belongs to the peptidase T1A family. The 26S proteasome consists of a 20S proteasome core and two 19S regulatory subunits. The 20S proteasome core is composed of 28 subunits that are arranged in four stacked rings, resulting in a barrel-shaped structure. The two end rings are each formed by seven alpha subunits, and the two central rings are each formed by seven beta subunits. The catalytic chamber with the active sites is on the inside of the barrel.

The protein localises to the cytoplasm. Its subcellular location is the nucleus. The proteasome is a multicatalytic proteinase complex which is characterized by its ability to cleave peptides with Arg, Phe, Tyr, Leu, and Glu adjacent to the leaving group at neutral or slightly basic pH. The proteasome has an ATP-dependent proteolytic activity. This chain is Proteasome subunit alpha type-3, found in Acanthamoeba castellanii (Amoeba).